The sequence spans 155 residues: Interleukin-2 (155 aa).

The signal sequence occupies residues 1–20 (MYKMQLLSCIALMLVLVANS). A glycan (O-linked (GalNAc...) threonine) is linked at Thr24. A disulfide bridge connects residues Cys79 and Cys127. Asn112 carries an N-linked (GlcNAc...) asparagine glycan.

It belongs to the IL-2 family.

It is found in the secreted. Its function is as follows. Cytokine produced by activated CD4-positive helper T-cells and to a lesser extend activated CD8-positive T-cells and natural killer (NK) cells that plays pivotal roles in the immune response and tolerance. Binds to a receptor complex composed of either the high-affinity trimeric IL-2R (IL2RA/CD25, IL2RB/CD122 and IL2RG/CD132) or the low-affinity dimeric IL-2R (IL2RB and IL2RG). Interaction with the receptor leads to oligomerization and conformation changes in the IL-2R subunits resulting in downstream signaling starting with phosphorylation of JAK1 and JAK3. In turn, JAK1 and JAK3 phosphorylate the receptor to form a docking site leading to the phosphorylation of several substrates including STAT5. This process leads to activation of several pathways including STAT, phosphoinositide-3-kinase/PI3K and mitogen-activated protein kinase/MAPK pathways. Functions as a T-cell growth factor and can increase NK-cell cytolytic activity as well. Promotes strong proliferation of activated B-cells and subsequently immunoglobulin production. Plays a pivotal role in regulating the adaptive immune system by controlling the survival and proliferation of regulatory T-cells, which are required for the maintenance of immune tolerance. Moreover, participates in the differentiation and homeostasis of effector T-cell subsets, including Th1, Th2, Th17 as well as memory CD8-positive T-cells. In Vulpes vulpes (Red fox), this protein is Interleukin-2 (IL2).